A 139-amino-acid polypeptide reads, in one-letter code: D-ribose pyranase (139 aa).

His-20 acts as the Proton donor in catalysis. Residues Asp-28, His-106, and 128 to 130 (YAN) contribute to the substrate site.

This sequence belongs to the RbsD / FucU family. RbsD subfamily. Homodecamer.

It localises to the cytoplasm. The enzyme catalyses beta-D-ribopyranose = beta-D-ribofuranose. Its pathway is carbohydrate metabolism; D-ribose degradation; D-ribose 5-phosphate from beta-D-ribopyranose: step 1/2. Catalyzes the interconversion of beta-pyran and beta-furan forms of D-ribose. The polypeptide is D-ribose pyranase (Edwardsiella ictaluri (strain 93-146)).